The following is a 538-amino-acid chain: CTP synthase (538 aa).

The tract at residues 1–265 is amidoligase domain; sequence MARYIFVTGG…DLQVLNYFKL (265 aa). Residue Ser-13 participates in CTP binding. Ser-13 is a binding site for UTP. Residues 14-19 and Asp-71 contribute to the ATP site; that span reads SLGKGL. Mg(2+) is bound by residues Asp-71 and Glu-139. CTP contacts are provided by residues 146 to 148, 186 to 191, and Lys-222; these read DIE and KTKPTQ. UTP contacts are provided by residues 186–191 and Lys-222; that span reads KTKPTQ. The Glutamine amidotransferase type-1 domain occupies 291 to 538; that stretch reads NIAIIGKYVE…SFIKAAKNHK (248 aa). Gly-353 contributes to the L-glutamine binding site. Catalysis depends on Cys-380, which acts as the Nucleophile; for glutamine hydrolysis. L-glutamine is bound by residues 381–384, Glu-404, and Arg-468; that span reads YGMQ. Active-site residues include His-513 and Glu-515.

It belongs to the CTP synthase family. Homotetramer.

It catalyses the reaction UTP + L-glutamine + ATP + H2O = CTP + L-glutamate + ADP + phosphate + 2 H(+). The catalysed reaction is L-glutamine + H2O = L-glutamate + NH4(+). It carries out the reaction UTP + NH4(+) + ATP = CTP + ADP + phosphate + 2 H(+). The protein operates within pyrimidine metabolism; CTP biosynthesis via de novo pathway; CTP from UDP: step 2/2. Allosterically activated by GTP, when glutamine is the substrate; GTP has no effect on the reaction when ammonia is the substrate. The allosteric effector GTP functions by stabilizing the protein conformation that binds the tetrahedral intermediate(s) formed during glutamine hydrolysis. Inhibited by the product CTP, via allosteric rather than competitive inhibition. Its function is as follows. Catalyzes the ATP-dependent amination of UTP to CTP with either L-glutamine or ammonia as the source of nitrogen. Regulates intracellular CTP levels through interactions with the four ribonucleotide triphosphates. This is CTP synthase from Pelagibacter ubique (strain HTCC1062).